The sequence spans 495 residues: Protein FAM83F (495 aa).

The residue at position 2 (alanine 2) is an N-acetylalanine. The DUF1669 stretch occupies residues 2-294; it reads AESQLSCLDE…LYAISEEVNL (293 aa). Position 4 is a phosphoserine (serine 4). 2 disordered regions span residues 341–362 and 384–495; these read QQRE…GESA and PISP…CVIS. The span at 447 to 458 shows a compositional bias: low complexity; sequence PAVPSSMASSPS. Serine 477 is modified (phosphoserine).

The protein belongs to the FAM83 family. In terms of assembly, directly interacts (via DUF1669) with CSNK1A1 and CSNK1A1L.

The protein localises to the cell membrane. In Mus musculus (Mouse), this protein is Protein FAM83F (Fam83f).